The chain runs to 208 residues: Ribosomal RNA large subunit methyltransferase E (208 aa).

G62, W64, D82, D98, and D123 together coordinate S-adenosyl-L-methionine. K163 functions as the Proton acceptor in the catalytic mechanism.

The protein belongs to the class I-like SAM-binding methyltransferase superfamily. RNA methyltransferase RlmE family.

The protein localises to the cytoplasm. It catalyses the reaction uridine(2552) in 23S rRNA + S-adenosyl-L-methionine = 2'-O-methyluridine(2552) in 23S rRNA + S-adenosyl-L-homocysteine + H(+). In terms of biological role, specifically methylates the uridine in position 2552 of 23S rRNA at the 2'-O position of the ribose in the fully assembled 50S ribosomal subunit. The sequence is that of Ribosomal RNA large subunit methyltransferase E from Glaesserella parasuis serovar 5 (strain SH0165) (Haemophilus parasuis).